The primary structure comprises 177 residues: MSEEIKKDDLQEEVEATETEETVEEVIEEIPEKSELELANERADEFENKYLRAHAEMQNIQRRSSEERQQLQRYRSQDLAKAILPSLDNLERALAVEGLTDDVKKGLEMTRDSLIQALKEEGVEEVEVDSFDHNFHMAVQTLPADDEHPADSIAEVFQKGYKLHERLLRPAMVVVYN.

Residues 1 to 26 (MSEEIKKDDLQEEVEATETEETVEEV) are disordered. Residues 10–26 (LQEEVEATETEETVEEV) are compositionally biased toward acidic residues.

It belongs to the GrpE family. As to quaternary structure, homodimer.

Its subcellular location is the cytoplasm. Functionally, participates actively in the response to hyperosmotic and heat shock by preventing the aggregation of stress-denatured proteins, in association with DnaK and GrpE. It is the nucleotide exchange factor for DnaK and may function as a thermosensor. Unfolded proteins bind initially to DnaJ; upon interaction with the DnaJ-bound protein, DnaK hydrolyzes its bound ATP, resulting in the formation of a stable complex. GrpE releases ADP from DnaK; ATP binding to DnaK triggers the release of the substrate protein, thus completing the reaction cycle. Several rounds of ATP-dependent interactions between DnaJ, DnaK and GrpE are required for fully efficient folding. The polypeptide is Protein GrpE (Streptococcus agalactiae serotype Ia (strain ATCC 27591 / A909 / CDC SS700)).